Consider the following 185-residue polypeptide: Ribosome-recycling factor (185 aa).

It belongs to the RRF family.

Its subcellular location is the cytoplasm. Functionally, responsible for the release of ribosomes from messenger RNA at the termination of protein biosynthesis. May increase the efficiency of translation by recycling ribosomes from one round of translation to another. This is Ribosome-recycling factor from Xanthomonas campestris pv. campestris (strain 8004).